Here is a 1246-residue protein sequence, read N- to C-terminus: Stromal processing peptidase, chloroplastic (1246 aa).

A chloroplast-targeting transit peptide spans 1–136 (MASFPSPPLA…AKIRRRHVLH (136 aa)). A Zn(2+)-binding site is contributed by His228. Glu231 (proton acceptor) is an active-site residue. His232 is a Zn(2+) binding site. Residue Glu302 is part of the active site. Glu309 is a Zn(2+) binding site.

The protein belongs to the peptidase M16 family. Zn(2+) serves as cofactor.

The protein localises to the plastid. It localises to the chloroplast stroma. Its function is as follows. Cleaves presequences (transit peptides) from chloroplastic protein precursors. Initially recognizes a precursor by binding to the C-terminus of its transit peptide and then removes the transit peptide in a single endoproteolytic step. In a next step, pursues the cleavage of transit peptide to a subfragment form. This is Stromal processing peptidase, chloroplastic from Oryza sativa subsp. japonica (Rice).